Reading from the N-terminus, the 867-residue chain is Cadherin-related family member 1 (867 aa).

The first 21 residues, Met-1–Ser-21, serve as a signal peptide directing secretion. The Extracellular portion of the chain corresponds to Val-22–Gly-707. Cadherin domains lie at Asn-39 to Phe-138, Leu-139 to Phe-250, Val-251 to Phe-357, Pro-363 to Phe-476, Ser-477 to Phe-580, and Asp-572 to Ala-692. A helical transmembrane segment spans residues Val-708–Phe-728. The Cytoplasmic segment spans residues Trp-729–Tyr-867. The interval Glu-777–Gly-825 is disordered. Residues Pro-795 to Leu-809 show a composition bias toward pro residues.

Expressed in photoreceptor cells of the outer nuclear layer of the retina and in the pinal gland.

It is found in the membrane. Potential calcium-dependent cell-adhesion protein. In Xenopus laevis (African clawed frog), this protein is Cadherin-related family member 1 (cdhr1).